Consider the following 836-residue polypeptide: MLDKARSQSKHMDESNAAASLLSMETTANNHHYLHNKTSRATLMNSSQDGKKHAEDEVSDGANSRHPTISSASIESLKTTYDENPLLSIMKSTCAPNNTPVHTPSGSPSLKVQSGGDIKDDPKENDTTTTTNTTLQDRRDSDNAVHAAASPLAPSNTPSDPKSLCNGHVAQATDPQISGAIQPQYTATNEDVFPYSSTSTNSNTATTTIVAGAKKKIHLPPPQAPAVSSPGTTAAGSGAGTGSGIRSRTGSDLPLIITSANKNNGKTTNSPMSILSRNNSTNNNDNNSIQSSDSRESSNNNEIGGYLRGGTKRGGSPSNDSQVQHNVHDDQCAVGVAPRNFYFNKDREITDPNVKLDENESKINISFWLNSKYRDEAYSLNESSSNNASSNTDTPTNSRHANTSSSITSRNNFQHFRFNQIPSQPPTSASSFTSTNNNNPQRNNINRGEDPFATSSRPSTGFFYGDLPNRNNRNSPFHTNEQYIPPPPPKYINSKLDGLRSRLLLGPNSASSSTKLDDDLGTAAAVLSNMRSSPYRTHDKPISNVNDMNNTNALGVPASRPHSSSFPSKGVLRPILLRIHNSEQQPIFESNNSTAVFDEDQDQNQDLSPYHLNLNSKKVLDPTFESRTRQVTWNKNGKRIDRRLSAPEQQQQLEVPPLKKSRRSVGNARVASQTNSDYNSLGESSTSSAPSSPSLKASSGLAYTADYPNATSPDFAKSKGKNVKPKAKSKAKQSSKKRPNNTTSKSKANNSQESNNATSSTSQGTRSRTGCWICRLRKKKCTEERPHCFNCERLKLDCHYDAFKPDFVSDPKKKQMKLEEIKKKTKEAKRRAMKKK.

The span at 1 to 14 (MLDKARSQSKHMDE) shows a compositional bias: basic and acidic residues. 4 disordered regions span residues 1–77 (MLDK…IESL), 92–168 (STCA…CNGH), 218–332 (HLPP…DDQC), and 381–464 (NESS…GFFY). Composition is skewed to polar residues over residues 39-48 (SRATLMNSSQ), 61-77 (GANSRHPTISSASIESL), and 92-112 (STCAPNNTPVHTPSGSPSLKV). S114 is subject to Phosphoserine. Residues 117–126 (DIKDDPKEND) are compositionally biased toward basic and acidic residues. Phosphoserine occurs at positions 141, 150, and 228. A compositionally biased stretch (low complexity) spans 226-236 (AVSSPGTTAAG). Polar residues predominate over residues 258 to 272 (TSANKNNGKTTNSPM). The span at 273–305 (SILSRNNSTNNNDNNSIQSSDSRESSNNNEIGG) shows a compositional bias: low complexity. A phosphoserine mark is found at S316 and S318. Residues 316–325 (SPSNDSQVQH) show a composition bias toward polar residues. A compositionally biased stretch (low complexity) spans 381–398 (NESSSNNASSNTDTPTNS). Over residues 399–414 (RHANTSSSITSRNNFQ) the composition is skewed to polar residues. The span at 426-446 (PTSASSFTSTNNNNPQRNNIN) shows a compositional bias: low complexity. Positions 508–594 (NSASSSTKLD…QPIFESNNST (87 aa)) are SIN3-binding. The tract at residues 636 to 766 (NGKRIDRRLS…ATSSTSQGTR (131 aa)) is disordered. S645 bears the Phosphoserine mark. Residues 670 to 679 (VASQTNSDYN) are compositionally biased toward polar residues. Low complexity predominate over residues 680-702 (SLGESSTSSAPSSPSLKASSGLA). The span at 718–739 (SKGKNVKPKAKSKAKQSSKKRP) shows a compositional bias: basic residues. The segment covering 740–751 (NNTTSKSKANNS) has biased composition (low complexity). The zn(2)-C6 fungal-type DNA-binding region spans 771-798 (CWICRLRKKKCTEERPHCFNCERLKLDC).

In terms of assembly, component of the RPD3C(L) complex composed of at least ASH1, CTI6, DEP1, PHO23, RPD3, RXT2, RXT3, SAP30, SDS3, SIN3, UME1 and UME6. Interacts with RIM11, MCK1 and IME1. Post-translationally, phosphorylated by RIM11 and MCK1.

It is found in the nucleus. Functionally, component of the RPD3C(L) histone deacetylase complex (HDAC) responsible for the deacetylation of lysine residues on the N-terminal part of the core histones (H2A, H2B, H3 and H4). Histone deacetylation gives a tag for epigenetic repression and plays an important role in transcriptional regulation, cell cycle progression and developmental events. Binds to the URS1 site (5'-AGCCGCCGA-3') and recruits the RPD3 histone deacetylase complex to the promoters to negatively regulate the expression of many genes including CAR1 (arginase), several required for sporulation, mating type switching, inositol metabolism, and oxidative carbon metabolism. Also recruits the ISW2 chromatin remodeling complex to promoters in a second gene repression pathway. Associates with the master regulator of meiosis IME1 in order to activate the expression of meiosis genes. Has both a positive and negative role in regulating phospholipid biosynthesis. This is Transcriptional regulatory protein UME6 (UME6) from Saccharomyces cerevisiae (strain ATCC 204508 / S288c) (Baker's yeast).